Here is a 228-residue protein sequence, read N- to C-terminus: Thiamine-phosphate synthase (228 aa).

4-amino-2-methyl-5-(diphosphooxymethyl)pyrimidine contacts are provided by residues 57–61 and Asn89; that span reads QLRDK. Residues Asp90 and Asp109 each contribute to the Mg(2+) site. Ser128 lines the 4-amino-2-methyl-5-(diphosphooxymethyl)pyrimidine pocket. 154–156 serves as a coordination point for 2-[(2R,5Z)-2-carboxy-4-methylthiazol-5(2H)-ylidene]ethyl phosphate; it reads TPS. Lys157 contributes to the 4-amino-2-methyl-5-(diphosphooxymethyl)pyrimidine binding site. 2-[(2R,5Z)-2-carboxy-4-methylthiazol-5(2H)-ylidene]ethyl phosphate contacts are provided by residues Gly185 and 205 to 206; that span reads IS.

This sequence belongs to the thiamine-phosphate synthase family. Mg(2+) serves as cofactor.

The enzyme catalyses 2-[(2R,5Z)-2-carboxy-4-methylthiazol-5(2H)-ylidene]ethyl phosphate + 4-amino-2-methyl-5-(diphosphooxymethyl)pyrimidine + 2 H(+) = thiamine phosphate + CO2 + diphosphate. It catalyses the reaction 2-(2-carboxy-4-methylthiazol-5-yl)ethyl phosphate + 4-amino-2-methyl-5-(diphosphooxymethyl)pyrimidine + 2 H(+) = thiamine phosphate + CO2 + diphosphate. The catalysed reaction is 4-methyl-5-(2-phosphooxyethyl)-thiazole + 4-amino-2-methyl-5-(diphosphooxymethyl)pyrimidine + H(+) = thiamine phosphate + diphosphate. Its pathway is cofactor biosynthesis; thiamine diphosphate biosynthesis; thiamine phosphate from 4-amino-2-methyl-5-diphosphomethylpyrimidine and 4-methyl-5-(2-phosphoethyl)-thiazole: step 1/1. In terms of biological role, condenses 4-methyl-5-(beta-hydroxyethyl)thiazole monophosphate (THZ-P) and 2-methyl-4-amino-5-hydroxymethyl pyrimidine pyrophosphate (HMP-PP) to form thiamine monophosphate (TMP). The sequence is that of Thiamine-phosphate synthase from Roseiflexus castenholzii (strain DSM 13941 / HLO8).